The chain runs to 99 residues: Small ribosomal subunit protein uS14c (99 aa).

A disordered region spans residues 46–66 (LQSSPRNSAPTRLHRRCSSTG).

This sequence belongs to the universal ribosomal protein uS14 family. Part of the 30S ribosomal subunit.

Its subcellular location is the plastid. The protein resides in the chloroplast. In terms of biological role, binds 16S rRNA, required for the assembly of 30S particles. This chain is Small ribosomal subunit protein uS14c, found in Pinus thunbergii (Japanese black pine).